Reading from the N-terminus, the 31-residue chain is Cytochrome b6-f complex subunit 6 (31 aa).

A helical transmembrane segment spans residues 4 to 26; that stretch reads ITSYFGFLLAALTVTSALFIGLS.

This sequence belongs to the PetL family. The 4 large subunits of the cytochrome b6-f complex are cytochrome b6, subunit IV (17 kDa polypeptide, PetD), cytochrome f and the Rieske protein, while the 4 small subunits are PetG, PetL, PetM and PetN. The complex functions as a dimer.

The protein resides in the plastid. The protein localises to the chloroplast thylakoid membrane. In terms of biological role, component of the cytochrome b6-f complex, which mediates electron transfer between photosystem II (PSII) and photosystem I (PSI), cyclic electron flow around PSI, and state transitions. PetL is important for photoautotrophic growth as well as for electron transfer efficiency and stability of the cytochrome b6-f complex. The chain is Cytochrome b6-f complex subunit 6 from Daucus carota (Wild carrot).